Reading from the N-terminus, the 364-residue chain is F-box protein At1g59680 (364 aa).

The F-box domain maps to 2 to 49; sequence TTMSDLSVDLVGEILSRVPLTSLSAVRCTCKSWNTLSKHQIFGKAELA.

This chain is F-box protein At1g59680, found in Arabidopsis thaliana (Mouse-ear cress).